The sequence spans 335 residues: Beta-ketoacyl-[acyl-carrier-protein] synthase III (335 aa).

Active-site residues include Cys117 and His258. An ACP-binding region spans residues 259 to 263; sequence QANQR. Residue Asn288 is part of the active site.

The protein belongs to the thiolase-like superfamily. FabH family. In terms of assembly, homodimer.

The protein localises to the cytoplasm. The catalysed reaction is malonyl-[ACP] + acetyl-CoA + H(+) = 3-oxobutanoyl-[ACP] + CO2 + CoA. It functions in the pathway lipid metabolism; fatty acid biosynthesis. Its function is as follows. Catalyzes the condensation reaction of fatty acid synthesis by the addition to an acyl acceptor of two carbons from malonyl-ACP. Catalyzes the first condensation reaction which initiates fatty acid synthesis and may therefore play a role in governing the total rate of fatty acid production. Possesses both acetoacetyl-ACP synthase and acetyl transacylase activities. Its substrate specificity determines the biosynthesis of branched-chain and/or straight-chain of fatty acids. The sequence is that of Beta-ketoacyl-[acyl-carrier-protein] synthase III from Synechococcus elongatus (strain ATCC 33912 / PCC 7942 / FACHB-805) (Anacystis nidulans R2).